We begin with the raw amino-acid sequence, 545 residues long: CTP synthase (545 aa).

Positions 1-265 are amidoligase domain; sequence MSRFIFVTGG…DAIVVEKFGL (265 aa). Ser13 contacts CTP. Ser13 provides a ligand contact to UTP. 14 to 19 is a binding site for ATP; the sequence is SLGKGI. Tyr54 contacts L-glutamine. Asp71 serves as a coordination point for ATP. Asp71 and Glu139 together coordinate Mg(2+). CTP contacts are provided by residues 146–148, 186–191, and Lys222; these read DIE and KTKPTQ. UTP contacts are provided by residues 186-191 and Lys222; that span reads KTKPTQ. The 252-residue stretch at 290–541 folds into the Glutamine amidotransferase type-1 domain; the sequence is TVGMVGKYIE…VAAALAEQKA (252 aa). Gly351 is an L-glutamine binding site. Cys378 serves as the catalytic Nucleophile; for glutamine hydrolysis. Residues 379–382, Glu402, and Arg469 contribute to the L-glutamine site; that span reads LGMQ. Residues His514 and Glu516 contribute to the active site.

The protein belongs to the CTP synthase family. Homotetramer.

It catalyses the reaction UTP + L-glutamine + ATP + H2O = CTP + L-glutamate + ADP + phosphate + 2 H(+). It carries out the reaction L-glutamine + H2O = L-glutamate + NH4(+). The catalysed reaction is UTP + NH4(+) + ATP = CTP + ADP + phosphate + 2 H(+). The protein operates within pyrimidine metabolism; CTP biosynthesis via de novo pathway; CTP from UDP: step 2/2. With respect to regulation, allosterically activated by GTP, when glutamine is the substrate; GTP has no effect on the reaction when ammonia is the substrate. The allosteric effector GTP functions by stabilizing the protein conformation that binds the tetrahedral intermediate(s) formed during glutamine hydrolysis. Inhibited by the product CTP, via allosteric rather than competitive inhibition. Functionally, catalyzes the ATP-dependent amination of UTP to CTP with either L-glutamine or ammonia as the source of nitrogen. Regulates intracellular CTP levels through interactions with the four ribonucleotide triphosphates. The protein is CTP synthase of Alcanivorax borkumensis (strain ATCC 700651 / DSM 11573 / NCIMB 13689 / SK2).